Reading from the N-terminus, the 327-residue chain is Interleukin-12 subunit beta (327 aa).

The first 22 residues, Met1 to Ala22, serve as a signal peptide directing secretion. Positions Ile23–Lys106 constitute an Ig-like C2-type domain. An intrachain disulfide couples Cys50 to Cys90. 2 N-linked (GlcNAc...) asparagine glycosylation sites follow: Asn134 and Asn152. The Fibronectin type-III domain occupies Pro237 to Pro327.

Belongs to the IL-12B family. As to quaternary structure, heterodimer with IL12A; disulfide-linked. The heterodimer is known as interleukin IL-12. Heterodimer with IL23A; disulfide-linked. The heterodimer is known as interleukin IL-23. Also secreted as a monomer. Interacts with NBR1; this interaction promotes IL-12 secretion.

The protein resides in the secreted. Cytokine that can act as a growth factor for activated T and NK cells, enhance the lytic activity of NK/lymphokine-activated killer cells, and stimulate the production of IFN-gamma by resting PBMC. Its function is as follows. Associates with IL23A to form the IL-23 interleukin, a heterodimeric cytokine which functions in innate and adaptive immunity. IL-23 may constitute with IL-17 an acute response to infection in peripheral tissues. IL-23 binds to a heterodimeric receptor complex composed of IL12RB1 and IL23R, activates the Jak-Stat signaling cascade, stimulates memory rather than naive T-cells and promotes production of pro-inflammatory cytokines. IL-23 induces autoimmune inflammation and thus may be responsible for autoimmune inflammatory diseases and may be important for tumorigenesis. This is Interleukin-12 subunit beta (IL12B) from Marmota monax (Woodchuck).